A 474-amino-acid chain; its full sequence is Probable glycine dehydrogenase (decarboxylating) subunit 2 (474 aa).

Lysine 266 carries the post-translational modification N6-(pyridoxal phosphate)lysine.

This sequence belongs to the GcvP family. C-terminal subunit subfamily. The glycine cleavage system is composed of four proteins: P, T, L and H. In this organism, the P 'protein' is a heterodimer of two subunits. Pyridoxal 5'-phosphate serves as cofactor.

It carries out the reaction N(6)-[(R)-lipoyl]-L-lysyl-[glycine-cleavage complex H protein] + glycine + H(+) = N(6)-[(R)-S(8)-aminomethyldihydrolipoyl]-L-lysyl-[glycine-cleavage complex H protein] + CO2. The glycine cleavage system catalyzes the degradation of glycine. The P protein binds the alpha-amino group of glycine through its pyridoxal phosphate cofactor; CO(2) is released and the remaining methylamine moiety is then transferred to the lipoamide cofactor of the H protein. This Thermus thermophilus (strain ATCC 27634 / DSM 579 / HB8) protein is Probable glycine dehydrogenase (decarboxylating) subunit 2.